A 238-amino-acid chain; its full sequence is Demethylmenaquinone methyltransferase (238 aa).

Residues threonine 60, aspartate 81, and 108–109 contribute to the S-adenosyl-L-methionine site; that span reads NA.

It belongs to the class I-like SAM-binding methyltransferase superfamily. MenG/UbiE family.

The enzyme catalyses a 2-demethylmenaquinol + S-adenosyl-L-methionine = a menaquinol + S-adenosyl-L-homocysteine + H(+). The protein operates within quinol/quinone metabolism; menaquinone biosynthesis; menaquinol from 1,4-dihydroxy-2-naphthoate: step 2/2. In terms of biological role, methyltransferase required for the conversion of demethylmenaquinol (DMKH2) to menaquinol (MKH2). The sequence is that of Demethylmenaquinone methyltransferase from Oceanobacillus iheyensis (strain DSM 14371 / CIP 107618 / JCM 11309 / KCTC 3954 / HTE831).